The chain runs to 416 residues: Glutamyl-tRNA reductase (416 aa).

Residues 48 to 51, serine 104, 109 to 111, and glutamine 115 each bind substrate; these read TCNR and EPQ. Cysteine 49 serves as the catalytic Nucleophile. 184–189 is an NADP(+) binding site; sequence GAGEMI.

It belongs to the glutamyl-tRNA reductase family. In terms of assembly, homodimer.

It carries out the reaction (S)-4-amino-5-oxopentanoate + tRNA(Glu) + NADP(+) = L-glutamyl-tRNA(Glu) + NADPH + H(+). Its pathway is porphyrin-containing compound metabolism; protoporphyrin-IX biosynthesis; 5-aminolevulinate from L-glutamyl-tRNA(Glu): step 1/2. In terms of biological role, catalyzes the NADPH-dependent reduction of glutamyl-tRNA(Glu) to glutamate 1-semialdehyde (GSA). In Dechloromonas aromatica (strain RCB), this protein is Glutamyl-tRNA reductase.